Consider the following 245-residue polypeptide: MALIEGVGDEVTVLFAVLACLLVLALAWVSTHTTESTDPQPQPPGTTTPAQPSEAMSASDSIREEAPGAESPSLRHRGPSAQPEPDTGVTASTPPDSPQEPLLLRLKFLNDSEQVARAWPQDTIGSLKRTQFPGQEQQVRLIYQGQLLGDDTQTLGSLHLPPNCVLHCHVSTRVGPPHPPCPPGSEPGPSGLEIGSLLLPLLLLLLLLLWYCQIQYRPFFPLTATLGLAGFTLLLSLLAFAMYRP.

The tract at residues 2–30 (ALIEGVGDEVTVLFAVLACLLVLALAWVS) is required to release iHOPS from membranes. A helical transmembrane segment spans residues 11–31 (VTVLFAVLACLLVLALAWVST). Residues 33–100 (TTESTDPQPQ…ASTPPDSPQE (68 aa)) are disordered. A phosphoserine mark is found at serine 73, serine 97, and serine 126. Positions 102–175 (LLLRLKFLND…LHCHVSTRVG (74 aa)) constitute a Ubiquitin-like domain. Helical transmembrane passes span 194 to 214 (IGSLLLPLLLLLLLLLWYCQI) and 219 to 239 (FFPLTATLGLAGFTLLLSLLA).

As to quaternary structure, interacts with EEF1A1, CAMLG, GRIA2 and GRIP1. Interacts with NPM1 and CDKN2A; TMUB1 can enhance interaction between NPM1 and CDKN2A and is proposed to bridge the proteins; proposed to be mediated by iHOPS. Interacts with TUBG1. Interacts with ERLIN2 and AMFR; TMUB1 promotes the interaction of ERLIN2 with AMFR. Isoform 1 (lHOPS) is processed by regulated intramembrane proteolysis (RIP) in the N-terminus to release iHOPS from membranes. In terms of processing, isoform 2 seems to undergo a selective cleavage in the C-terminal region to release an additional cytoplasmic form. Expressed in adult brain; at protein level. Isoform 1 (lHOPS) is highly expressed in small intestine, stomach and epididymis. Isoform 2 (sHOPS) and iHOPS are abundantly expressed in brain, liver and adrenal gland.

The protein localises to the membrane. The protein resides in the postsynaptic cell membrane. It localises to the recycling endosome. It is found in the cytoplasm. Its subcellular location is the nucleus. The protein localises to the nucleolus. The protein resides in the cytoskeleton. It localises to the microtubule organizing center. It is found in the centrosome. In terms of biological role, involved in sterol-regulated ubiquitination and degradation of HMG-CoA reductase HMGCR. Involved in positive regulation of AMPA-selective glutamate receptor GRIA2 recycling to the cell surface. Acts as a negative regulator of hepatocyte growth during regeneration. Its function is as follows. May contribute to the regulation of translation during cell-cycle progression. May contribute to the regulation of cell proliferation. May be involved in centrosome assembly. Modulates stabilization and nucleolar localization of tumor suppressor CDKN2A and enhances association between CDKN2A and NPM1. This Mus musculus (Mouse) protein is Transmembrane and ubiquitin-like domain-containing protein 1 (Tmub1).